The following is a 128-amino-acid chain: Small ribosomal subunit protein uS11 (128 aa).

It belongs to the universal ribosomal protein uS11 family. In terms of assembly, part of the 30S ribosomal subunit. Interacts with proteins S7 and S18. Binds to IF-3.

Its function is as follows. Located on the platform of the 30S subunit, it bridges several disparate RNA helices of the 16S rRNA. Forms part of the Shine-Dalgarno cleft in the 70S ribosome. The sequence is that of Small ribosomal subunit protein uS11 from Acinetobacter baylyi (strain ATCC 33305 / BD413 / ADP1).